The following is a 505-amino-acid chain: ATP synthase subunit beta (505 aa).

The disordered stretch occupies residues 1 to 25 (MAKAATPKETAAVKKPAAPKKAATA). Residue 183 to 190 (GGAGVGKT) coordinates ATP.

This sequence belongs to the ATPase alpha/beta chains family. F-type ATPases have 2 components, CF(1) - the catalytic core - and CF(0) - the membrane proton channel. CF(1) has five subunits: alpha(3), beta(3), gamma(1), delta(1), epsilon(1). CF(0) has three main subunits: a(1), b(2) and c(9-12). The alpha and beta chains form an alternating ring which encloses part of the gamma chain. CF(1) is attached to CF(0) by a central stalk formed by the gamma and epsilon chains, while a peripheral stalk is formed by the delta and b chains.

Its subcellular location is the cell inner membrane. It carries out the reaction ATP + H2O + 4 H(+)(in) = ADP + phosphate + 5 H(+)(out). In terms of biological role, produces ATP from ADP in the presence of a proton gradient across the membrane. The catalytic sites are hosted primarily by the beta subunits. This Sinorhizobium fredii (strain NBRC 101917 / NGR234) protein is ATP synthase subunit beta.